The chain runs to 498 residues: Minor fimbrium subunit Mfa1 (498 aa).

An N-terminal signal peptide occupies residues 1–19 (MKLNKMFLVGALLSLGFAS). Residue C20 is the site of N-palmitoyl cysteine attachment. C20 is lipidated: S-diacylglycerol cysteine. Positions 20–50 (CSKEGNGPAPDSSSTADTHMSVSMSLPQHNR) are excised as a propeptide. The disordered stretch occupies residues 436-476 (SGNPFVPTDPDPNNPDTPDNPDTPDPEDPDTPNPEEPLPVQ).

The protein belongs to the bacteroidetes fimbrillin superfamily. FimA/Mfa1 family. In terms of assembly, structural component of the fimbrial stalk. Minor fimbriae are composed of a structural subunit, such as the 53 kDa fimbrillin, and the accessory subunits Mfa3, Mfa4 and Mfa5. Fimbrium assembly occurs by linear, head-to-tail oligomerization of fimbrial subunits. This is mediated via insertion of a C-terminal beta-strand from one subunit into a groove in the N-terminal domain of the following subunit.

It is found in the fimbrium. It localises to the cell outer membrane. Its function is as follows. Structural subunit of the minor fimbriae. These filamentous pili are attached to the cell surface; they mediate biofilm formation, adhesion onto host cells and onto other bacteria that are part of the oral microbiome. They play an important role in invasion of periodontal tissues and are recognized as major virulence factors. Mfa1 orthologs from different strains have highly divergent sequences, and this correlates with pathogenicity. This is Minor fimbrium subunit Mfa1 from Porphyromonas gingivalis (Bacteroides gingivalis).